We begin with the raw amino-acid sequence, 86 residues long: Small ribosomal subunit protein bS16 (86 aa).

The protein belongs to the bacterial ribosomal protein bS16 family.

This chain is Small ribosomal subunit protein bS16, found in Myxococcus xanthus (strain DK1622).